Reading from the N-terminus, the 631-residue chain is Phosphomethylpyrimidine synthase (631 aa).

Substrate is bound by residues Asn-239, Met-268, Tyr-297, His-333, 353–355 (SRG), 394–397 (DGLR), and Glu-433. Zn(2+) is bound at residue His-437. Substrate is bound at residue Tyr-460. His-501 is a binding site for Zn(2+). Residues Cys-581, Cys-584, and Cys-589 each contribute to the [4Fe-4S] cluster site.

The protein belongs to the ThiC family. Homodimer. [4Fe-4S] cluster is required as a cofactor.

It catalyses the reaction 5-amino-1-(5-phospho-beta-D-ribosyl)imidazole + S-adenosyl-L-methionine = 4-amino-2-methyl-5-(phosphooxymethyl)pyrimidine + CO + 5'-deoxyadenosine + formate + L-methionine + 3 H(+). Its pathway is cofactor biosynthesis; thiamine diphosphate biosynthesis. Catalyzes the synthesis of the hydroxymethylpyrimidine phosphate (HMP-P) moiety of thiamine from aminoimidazole ribotide (AIR) in a radical S-adenosyl-L-methionine (SAM)-dependent reaction. This Shigella boydii serotype 4 (strain Sb227) protein is Phosphomethylpyrimidine synthase.